We begin with the raw amino-acid sequence, 500 residues long: Protein PIGMENT DEFECTIVE 338, chloroplastic (500 aa).

A chloroplast-targeting transit peptide spans 1–63; that stretch reads MQTLLCQPCK…FAFRGFSICR (63 aa). S1 motif domains lie at 156–265, 283–351, and 362–431; these read KPGD…LSSR, NEPI…LSEK, and GTLL…LSIA.

This sequence belongs to the bacterial ribosomal protein bS1 family. Interacts with CRP1 and PRFB3. In terms of tissue distribution, present in leaves (at protein level). Confined to leaf chlorenchyma cells.

It localises to the plastid. Its subcellular location is the chloroplast. In terms of biological role, RNA-binding protein that acts as an RNA chaperone to remodel RNA structure and activates their translation. Required for seed pigmentation. Necessary for chloroplast development and subsequent photosynthetic electron flow, as well as for non-photochemical quenching (NPQ). Rubisco regulatory factor which regulates the concerted biogenesis of NDH, PSI (including PsaA, PsaB, PsaD, PsaF, PsaL, PsaG, PsaK and NdhH) and Cytb(6)f (including PetA, PetB, PetC and PetD) complexes. Binds specifically to and involved in the post-transcriptional regulation of plastid-encoded mRNAs (e.g. rbcL, petA, petB, petD and Ycf1), thus modulating expression, cellular localization/compartmentalization, and photosynthetic function. This Arabidopsis thaliana (Mouse-ear cress) protein is Protein PIGMENT DEFECTIVE 338, chloroplastic.